Reading from the N-terminus, the 163-residue chain is Campylobacter invasion antigen D (163 aa).

The MKD signature appears at 135–145; that stretch reads KKDDLENRLNL.

Interacts with the host cell protein IQGAP1, thus displacing RACGAP1 from the IQGAP1 complex.

Its subcellular location is the secreted. It is found in the host cytoplasm. The protein localises to the host cytosol. Functionally, effector protein required for the development of acute disease and colon inflammatory lesions. Required for maximal host cell invasion and maximal secretion of the inflammatory chemokine interleukin-8 (IL-8) from host cells. Acts by activating the host MAP kinase signaling pathways ERK-1/2 and p38 to promote both cellular invasion and the release of IL-8. CiaD mediated activation of ERK-1/2 leads to the phosphorylation of host cortactin (CTTN) on serine residues and association of cortactin with N-WASP, promoting actin cytoskeleton rearrangement, membrane ruffling and host cell invasion. In addition, maximal host cell invasion requires interaction with the host cell protein IQGAP1, a Ras GTPase-activating-like protein. Binding to IQGAP1 facilitates the activation of the Rho GTPases RAC1 and CDC42, further promoting actin reorganization and bacterial uptake. CiaD promotes RAC1 activation by excluding RACGAP1 from the IQGAP1 complex, preventing the deactivation of RAC1. CiaD probably activates ERK signaling upstream or independently of IQGAP1. This chain is Campylobacter invasion antigen D, found in Campylobacter jejuni subsp. jejuni serotype O:2 (strain ATCC 700819 / NCTC 11168).